The chain runs to 216 residues: Probable transaldolase (216 aa).

The Schiff-base intermediate with substrate role is filled by Lys-83.

The protein belongs to the transaldolase family. Type 3B subfamily.

Its subcellular location is the cytoplasm. The catalysed reaction is D-sedoheptulose 7-phosphate + D-glyceraldehyde 3-phosphate = D-erythrose 4-phosphate + beta-D-fructose 6-phosphate. The protein operates within carbohydrate degradation; pentose phosphate pathway; D-glyceraldehyde 3-phosphate and beta-D-fructose 6-phosphate from D-ribose 5-phosphate and D-xylulose 5-phosphate (non-oxidative stage): step 2/3. In terms of biological role, transaldolase is important for the balance of metabolites in the pentose-phosphate pathway. This Thermosipho africanus (strain TCF52B) protein is Probable transaldolase.